The sequence spans 389 residues: uncharacterized protein (389 aa).

4 disordered regions span residues S119–Q156, P180–G233, S294–T321, and P362–V389. Over residues S137–N155 the composition is skewed to polar residues. The segment covering D190 to A204 has biased composition (acidic residues).

This is an uncharacterized protein from Caenorhabditis elegans.